Consider the following 342-residue polypeptide: Putative gluconeogenesis factor (342 aa).

Residues 318 to 342 (SEPPVAATQEIPIDGGRPRGDDAWR) are disordered. T325 is subject to Phosphothreonine. Residues 333–342 (GRPRGDDAWR) are compositionally biased toward basic and acidic residues.

Belongs to the gluconeogenesis factor family. Phosphorylated by PknA and/or PknB.

The protein localises to the cytoplasm. Required for morphogenesis under gluconeogenic growth conditions. This is Putative gluconeogenesis factor from Mycobacterium tuberculosis (strain CDC 1551 / Oshkosh).